Reading from the N-terminus, the 176-residue chain is Nicotinamide-nucleotide adenylyltransferase (176 aa).

This sequence belongs to the archaeal NMN adenylyltransferase family.

It localises to the cytoplasm. The enzyme catalyses beta-nicotinamide D-ribonucleotide + ATP + H(+) = diphosphate + NAD(+). It participates in cofactor biosynthesis; NAD(+) biosynthesis; NAD(+) from nicotinamide D-ribonucleotide: step 1/1. The polypeptide is Nicotinamide-nucleotide adenylyltransferase (Halorubrum lacusprofundi (strain ATCC 49239 / DSM 5036 / JCM 8891 / ACAM 34)).